Here is a 523-residue protein sequence, read N- to C-terminus: Probable endopeptidase p60 (523 aa).

A signal peptide spans 1 to 27 (MNMKKATIAATAGIAVTAFAAPTIASA). A LysM 1 domain is found at 28-71 (STVVVEAGDTLWGIAQDNGTTVDALKKANKLTTDKIVPGQKLQV). Residues 78-142 (KTEKSVSATW…VNGKYLGNAV (65 aa)) enclose the SH3b domain. The segment at 146–188 (PSATPEVKQEETTQAAPAQQTKTEVKQATPAATTEKDAVETKT) is disordered. Over residues 157-167 (TTQAAPAQQTK) the composition is skewed to low complexity. A LysM 2 domain is found at 198-241 (TTHTVKSGDTIWALSVKYGASVQDLMSWNNLSSSSIYVGQNIAV). 2 stretches are compositionally biased toward low complexity: residues 251–282 (PKAE…TTTT) and 290–318 (EKQT…TNAS). Disordered regions lie at residues 251-323 (PKAE…YTVK) and 367-408 (ATNT…SSSA). Positions 318 to 361 (SSYTVKSGDTLGKIASTFGTTVSKIKALNGLTSDNLQVGDVLKV) constitute a LysM 3 domain. The 119-residue stretch at 405 to 523 (SSSASAIIAE…GQYLVGFGRV (119 aa)) folds into the NlpC/P60 domain. The active-site Nucleophile is cysteine 435. Catalysis depends on histidine 485, which acts as the Proton acceptor. Residue asparagine 497 is part of the active site.

Belongs to the peptidase C40 family.

Functionally, this major extracellular protein may be involved in the invasion of non-professional phagocytic cells by Listeria. The polypeptide is Probable endopeptidase p60 (iap) (Listeria seeligeri).